A 194-amino-acid polypeptide reads, in one-letter code: Putative manganese efflux pump MntP (194 aa).

Transmembrane regions (helical) follow at residues 8 to 28 (LLAI…GIIL), 36 to 56 (MLIM…LGWL), 61 to 81 (FSHL…AFLG), 109 to 129 (MAVA…FLGI), 138 to 158 (PAGI…IFGI), and 172 to 192 (LWGG…HLFF).

It belongs to the MntP (TC 9.B.29) family.

The protein resides in the cell inner membrane. Its function is as follows. Probably functions as a manganese efflux pump. This chain is Putative manganese efflux pump MntP, found in Bacteroides fragilis (strain ATCC 25285 / DSM 2151 / CCUG 4856 / JCM 11019 / LMG 10263 / NCTC 9343 / Onslow / VPI 2553 / EN-2).